Here is a 668-residue protein sequence, read N- to C-terminus: S-adenosyl-L-methionine-dependent tRNA 4-demethylwyosine synthase TYW1B (668 aa).

The Flavodoxin-like domain maps to 37 to 191; the sequence is CVQIVIEMQG…NFRAWKTKFI (155 aa). Residues 43–47 and 130–162 contribute to the FMN site; these read EMQGF and VFGL…HRVM. Residues 202–269 are disordered; sequence RKKSCGGHCK…QSLNSIVDVE (68 aa). Composition is skewed to basic and acidic residues over residues 213–223 and 233–243; these read GKCESHQHGSE and DELHHRDTKEE. Acidic residues predominate over residues 244-255; it reads EPFESSSEEEFG. The 245-residue stretch at 336 to 580 folds into the Radical SAM core domain; it reads LWNESHRCME…VDLIPEYEIA (245 aa). 3 residues coordinate [4Fe-4S] cluster: Cys-352, Cys-356, and Cys-359.

This sequence belongs to the TYW1 family. Requires [4Fe-4S] cluster as cofactor.

The enzyme catalyses N(1)-methylguanosine(37) in tRNA(Phe) + pyruvate + S-adenosyl-L-methionine = 4-demethylwyosine(37) in tRNA(Phe) + 5'-deoxyadenosine + L-methionine + CO2 + H2O. It functions in the pathway tRNA modification; wybutosine-tRNA(Phe) biosynthesis. In terms of biological role, probable component of the wybutosine biosynthesis pathway. Wybutosine is a hyper modified guanosine with a tricyclic base found at the 3'-position adjacent to the anticodon of eukaryotic phenylalanine tRNA. Catalyzes the condensation of N-methylguanine with 2 carbon atoms from pyruvate to form the tricyclic 4-demethylwyosine, an intermediate in wybutosine biosynthesis. This is S-adenosyl-L-methionine-dependent tRNA 4-demethylwyosine synthase TYW1B (TYW1B) from Homo sapiens (Human).